An 85-amino-acid chain; its full sequence is Small ribosomal subunit protein bS20 (85 aa).

It belongs to the bacterial ribosomal protein bS20 family.

Its function is as follows. Binds directly to 16S ribosomal RNA. The chain is Small ribosomal subunit protein bS20 from Borrelia garinii subsp. bavariensis (strain ATCC BAA-2496 / DSM 23469 / PBi) (Borreliella bavariensis).